A 60-amino-acid polypeptide reads, in one-letter code: Probable tautomerase SAG1079 (60 aa).

The active-site Proton acceptor; via imino nitrogen is the Pro-2.

This sequence belongs to the 4-oxalocrotonate tautomerase family.

In Streptococcus agalactiae serotype V (strain ATCC BAA-611 / 2603 V/R), this protein is Probable tautomerase SAG1079.